Here is a 508-residue protein sequence, read N- to C-terminus: MAMTILHASEKVNAEAEATTCPPTEKVKEEQQQQEQLQHSKTSKRVQFYRFALFFIAGSFAAFSFHALTSSSSWRLRQLHHLPNAHYLQTREEFAVYSVEELNAFKEFYDKSISDSVGASYSEAEQTNIKEALGALRLAQDMHLSGKDDKASRLFEHALALAPKHPEVLLRYGEFLEHNQRNIVLADQYYFQALTLCPSNSEALANRQRTAEVVQTLDERRLQSLDSKRDALSAIHESSSALRRAKKEAYFQHIYHSVGIEGNTMTLAQTRSILETRMAVDGKSIDEHNEILGMDLAMKYINASLVQKLEITIKDILELHRRVLGHVDPIEGGEFRRNQVYVGGHVPPGPGDLALLMQRFERWLNSEHSSSLHPVNYAAYAHYKLVHIHPFIDGNGRTSRLLMNTLLMRAGYPPVIIPKQQRSKYYHFLKLANEGDIRPFVRFIADCTEKTLDLYLWATSDLPQQIPMLIQTESEAGEQLAQMRSPHISAQSASIPEFYEFSGSGFQP.

Residues 48–70 (FYRFALFFIAGSFAAFSFHALTS) traverse the membrane as a helical segment. TPR repeat units lie at residues 132-165 (ALGA…APKH) and 166-200 (PEVL…CPSN). Positions 257–262 (SVGIEG) match the Inhibitory (S/T)XXXE(G/N) motif motif. Residues Glu-261 and 342–345 (VGGH) each bind ATP. The 136-residue stretch at 311-446 (ITIKDILELH…IRPFVRFIAD (136 aa)) folds into the Fido domain. The active site involves His-389. ATP-binding positions include 393 to 400 (DGNGRTSR), 425 to 426 (YY), and Asn-433.

Belongs to the fic family. In terms of assembly, homodimer.

It is found in the membrane. The enzyme catalyses L-tyrosyl-[protein] + ATP = O-(5'-adenylyl)-L-tyrosyl-[protein] + diphosphate. It carries out the reaction L-threonyl-[protein] + ATP = 3-O-(5'-adenylyl)-L-threonyl-[protein] + diphosphate. It catalyses the reaction 3-O-(5'-adenylyl)-L-threonyl-[protein] + H2O = L-threonyl-[protein] + AMP + H(+). With respect to regulation, the side chain of Glu-261 determines which of the two opposing activities (AMPylase or de-AMPylase) will take place. In response to endoplasmic reticulum stress, mediates de-AMPylase activity. Adenylyltransferase activity is inhibited by the inhibitory helix present at the N-terminus: Glu-261 binds ATP and competes with ATP-binding at Arg-400, thereby preventing adenylyltransferase activity. In unstressed cells, disengagement of Glu-261 promotes adenylyltransferase activity. Activation dissociates ATP-binding from Glu-261, allowing ordered binding of the entire ATP moiety with the alpha-phosphate in an orientation that is productive for accepting an incoming target hydroxyl side chain. Its function is as follows. Protein that can both mediate the addition of adenosine 5'-monophosphate (AMP) to specific residues of target proteins (AMPylation), and the removal of the same modification from target proteins (de-AMPylation), depending on the context. The side chain of Glu-261 determines which of the two opposing activities (AMPylase or de-AMPylase) will take place. Acts as a key regulator of the unfolded protein response (UPR) by mediating AMPylation or de-AMPylation of Hsc70-3/BiP. In unstressed cells, acts as an adenylyltransferase by mediating AMPylation of Hsc70-3/BiP at 'Thr-518', thereby inactivating it. In response to endoplasmic reticulum stress, acts as a phosphodiesterase by mediating removal of ATP (de-AMPylation) from Hsc70-3/BiP at 'Thr-518', leading to restore HSPA5/BiP activity. This Drosophila persimilis (Fruit fly) protein is Protein adenylyltransferase Fic.